A 109-amino-acid polypeptide reads, in one-letter code: Trafficking protein particle complex subunit 2-like protein (109 aa).

This sequence belongs to the TRAPP small subunits family. Sedlin subfamily. Component of the multisubunit TRAPP (transport protein particle) complex, which includes at least TRAPPC2, TRAPPC2L, TRAPPC3, TRAPPC3L, TRAPPC4, TRAPPC5, TRAPPC8, TRAPPC9, TRAPPC10, TRAPPC11 and TRAPPC12. Interacts with the heterodimer TRAPPC3-TRAPPC6A.

The protein localises to the cytoplasm. It is found in the perinuclear region. The protein resides in the endoplasmic reticulum. Its subcellular location is the golgi apparatus. In terms of biological role, may play a role in vesicular transport from endoplasmic reticulum to Golgi. The chain is Trafficking protein particle complex subunit 2-like protein (TRAPPC2L) from Pongo abelii (Sumatran orangutan).